Consider the following 349-residue polypeptide: 5-deoxyribose 1-phosphate isomerase (349 aa).

Substrate contacts are provided by residues 49–51 (RGA), R92, and Q199. The Proton donor role is filled by D240. Residue 250 to 251 (NK) coordinates substrate.

Belongs to the EIF-2B alpha/beta/delta subunits family. DrdI subfamily.

The enzyme catalyses 5-deoxy-alpha-D-ribose 1-phosphate = 5-deoxy-D-ribulose 1-phosphate. It participates in carbohydrate degradation. Its function is as follows. Catalyzes the isomerization of 5-deoxy-alpha-D-ribose 1-phosphate to 5-deoxy-D-ribulose 1-phosphate, as part of a 5-deoxyribose salvage pathway that recycles this toxic radical SAM enzyme by-product to mainstream metabolites. In Clostridium botulinum (strain Kyoto / Type A2), this protein is 5-deoxyribose 1-phosphate isomerase.